A 73-amino-acid polypeptide reads, in one-letter code: Translation initiation factor IF-1 (73 aa).

The 73-residue stretch at 1–73 (MAKKDGAIEV…SRGRIVYRYK (73 aa)) folds into the S1-like domain.

The protein belongs to the IF-1 family. In terms of assembly, component of the 30S ribosomal translation pre-initiation complex which assembles on the 30S ribosome in the order IF-2 and IF-3, IF-1 and N-formylmethionyl-tRNA(fMet); mRNA recruitment can occur at any time during PIC assembly.

The protein localises to the cytoplasm. Functionally, one of the essential components for the initiation of protein synthesis. Stabilizes the binding of IF-2 and IF-3 on the 30S subunit to which N-formylmethionyl-tRNA(fMet) subsequently binds. Helps modulate mRNA selection, yielding the 30S pre-initiation complex (PIC). Upon addition of the 50S ribosomal subunit IF-1, IF-2 and IF-3 are released leaving the mature 70S translation initiation complex. The sequence is that of Translation initiation factor IF-1 from Mycobacterium avium (strain 104).